A 26-amino-acid polypeptide reads, in one-letter code: Acetylcholine receptor subunit delta (26 aa).

The protein belongs to the ligand-gated ion channel (TC 1.A.9) family. Acetylcholine receptor (TC 1.A.9.1) subfamily. As to quaternary structure, pentamer of two alpha chains, and one each of the beta, delta, and gamma chains.

The protein resides in the postsynaptic cell membrane. Its subcellular location is the cell membrane. The enzyme catalyses K(+)(in) = K(+)(out). It carries out the reaction Na(+)(in) = Na(+)(out). In terms of biological role, after binding acetylcholine, the AChR responds by an extensive change in conformation that affects all subunits and leads to opening of an ion-conducting channel across the plasma membrane. The protein is Acetylcholine receptor subunit delta (chrnd) of Electrophorus electricus (Electric eel).